A 112-amino-acid chain; its full sequence is MQPGGAPDMSALLAQAQQMQQQLMAAQQEMAQAEVTGQAGGGLVVATVKGTGEVVGLQIDPKVVDPEDVETLQDLVIGAIEDASRKAQEVAAEKLGPLAGGLGGGLPGLPGF.

The protein belongs to the YbaB/EbfC family. As to quaternary structure, homodimer.

It is found in the cytoplasm. Its subcellular location is the nucleoid. Functionally, binds to DNA and alters its conformation. May be involved in regulation of gene expression, nucleoid organization and DNA protection. This chain is Nucleoid-associated protein RER_03900, found in Rhodococcus erythropolis (strain PR4 / NBRC 100887).